Reading from the N-terminus, the 339-residue chain is ADP-L-glycero-D-manno-heptose-6-epimerase (339 aa).

Residues 11-12 (FI), 32-33 (DD), lysine 39, lysine 54, 75-79 (EGACS), and asparagine 92 contribute to the NADP(+) site. Tyrosine 139 functions as the Proton acceptor in the catalytic mechanism. Lysine 143 contacts NADP(+). Asparagine 170 lines the substrate pocket. NADP(+)-binding residues include valine 171 and lysine 179. The Proton acceptor role is filled by lysine 179. Substrate contacts are provided by residues arginine 181, histidine 188, 202-205 (FGEY), arginine 215, and tyrosine 294.

The protein belongs to the NAD(P)-dependent epimerase/dehydratase family. HldD subfamily. In terms of assembly, homopentamer. It depends on NADP(+) as a cofactor.

The catalysed reaction is ADP-D-glycero-beta-D-manno-heptose = ADP-L-glycero-beta-D-manno-heptose. It participates in nucleotide-sugar biosynthesis; ADP-L-glycero-beta-D-manno-heptose biosynthesis; ADP-L-glycero-beta-D-manno-heptose from D-glycero-beta-D-manno-heptose 7-phosphate: step 4/4. Catalyzes the interconversion between ADP-D-glycero-beta-D-manno-heptose and ADP-L-glycero-beta-D-manno-heptose via an epimerization at carbon 6 of the heptose. This chain is ADP-L-glycero-D-manno-heptose-6-epimerase, found in Polynucleobacter necessarius subsp. necessarius (strain STIR1).